Here is a 185-residue protein sequence, read N- to C-terminus: Dense granule protein 2 (185 aa).

The first 23 residues, Met1–Ala23, serve as a signal peptide directing secretion. Residue Asn18 is glycosylated (N-linked (GlcNAc...) asparagine). 2 disordered regions span residues Gly41 to Ala75 and Ala142 to Gln185. The segment covering Pro43–Glu66 has biased composition (basic and acidic residues).

Post-translationally, may also be O-glycosylated. The N-terminus is blocked.

It is found in the parasitophorous vacuole. Its function is as follows. Major granular component involved in excreted-secreted antigen (ESA) immunity. Possibly acts in conjunction with GRA1. In Toxoplasma gondii, this protein is Dense granule protein 2 (GRA2).